A 461-amino-acid chain; its full sequence is Cysteine--tRNA ligase (461 aa).

Cys28 is a binding site for Zn(2+). The 'HIGH' region signature appears at 30–40; that stretch reads ITVYDLCHIGH. Residues Cys209, His234, and Glu238 each contribute to the Zn(2+) site. The short motif at 266 to 270 is the 'KMSKS' region element; sequence KMSKS. Residue Lys269 participates in ATP binding.

Belongs to the class-I aminoacyl-tRNA synthetase family. In terms of assembly, monomer. It depends on Zn(2+) as a cofactor.

Its subcellular location is the cytoplasm. It catalyses the reaction tRNA(Cys) + L-cysteine + ATP = L-cysteinyl-tRNA(Cys) + AMP + diphosphate. The chain is Cysteine--tRNA ligase from Salmonella dublin (strain CT_02021853).